The primary structure comprises 208 residues: Hemocyanin, units E and F (208 aa).

His1 is a binding site for Cu cation. Residues 1–74 (HGLPAQCPNA…HDLESVRGNL (74 aa)) are unit E. Cys7 and Cys18 are joined by a disulfide. Residues 19 to 21 (CLH) constitute a cross-link (2'-(S-cysteinyl)-histidine (Cys-His)). N-linked (GlcNAc...) asparagine glycosylation is present at Asn43. The tract at residues 75–208 (VRKNVDRLSL…GHLSLLSPET (134 aa)) is unit F. Position 113 (His113) interacts with Cu cation. A disulfide bridge links Cys119 with Cys130. Residues 131 to 133 (CLH) constitute a cross-link (2'-(S-cysteinyl)-histidine (Cys-His)). Positions 133 and 142 each coordinate Cu cation.

The protein belongs to the tyrosinase family. Hemocyanin subfamily. As to quaternary structure, decamers of large identical subunits (390 kDa), each containing 8 globular oxygen-binding functional units. Cu(2+) serves as cofactor.

Hemocyanins are copper-containing oxygen carriers occurring freely dissolved in the hemolymph of many mollusks and arthropods. This is Hemocyanin, units E and F from Sepia officinalis (Common cuttlefish).